Reading from the N-terminus, the 1484-residue chain is Glutamate receptor ionotropic, NMDA 2B (1484 aa).

The first 26 residues, 1–26 (MKPRAECCSPKFWLVLAVLAVSGSRA), serve as a signal peptide directing secretion. Residues 27 to 555 (RSQKSPPSIG…SPSAFLEPFS (529 aa)) lie on the Extracellular side of the membrane. Asn-74 carries N-linked (GlcNAc...) asparagine glycosylation. An intrachain disulfide couples Cys-86 to Cys-321. Residues His-127 and Glu-284 each coordinate Zn(2+). N-linked (GlcNAc...) asparagine glycosylation is found at Asn-341, Asn-348, Asn-444, and Asn-491. 2 disulfide bridges follow: Cys-429/Cys-456 and Cys-436/Cys-457. L-glutamate contacts are provided by Thr-514 and Arg-519. Asn-542 carries N-linked (GlcNAc...) asparagine glycosylation. A helical membrane pass occupies residues 556-576 (ADVWVMMFVMLLIVSAVAVFV). Topologically, residues 577 to 601 (FEYFSPVGYNRCLADGREPGGPSFT) are cytoplasmic. An intramembrane region (discontinuously helical) is located at residues 602–613 (IGKAIWLLWGLV). The interval 604-623 (KAIWLLWGLVFNNSVPVQNP) is pore-forming. Residues 614–627 (FNNSVPVQNPKGTT) are Cytoplasmic-facing. The chain crosses the membrane as a helical span at residues 628–647 (SKIMVSVWAFFAVIFLASYT). The Extracellular portion of the chain corresponds to 648 to 819 (ANLAAFMIQE…SSQLDIDNMA (172 aa)). Asn-688 carries an N-linked (GlcNAc...) asparagine glycan. L-glutamate contacts are provided by residues 690-691 (ST) and Asp-732. A helical membrane pass occupies residues 820-835 (GVFYMLGAAMALSLIT). Topologically, residues 836–1484 (FICEHLFYWQ…EKLSSIESDV (649 aa)) are cytoplasmic. Ser-882, Ser-886, Ser-917, and Ser-920 each carry phosphoserine. Phosphotyrosine is present on residues Tyr-962 and Tyr-1039. 3 positions are modified to phosphoserine: Ser-1058, Ser-1061, and Ser-1064. Residues 1074 to 1097 (EGNAAKRRKQQYKDSLKKRPASAK) are disordered. Residues Tyr-1109 and Tyr-1133 each carry the phosphotyrosine modification. At Ser-1143 the chain carries Phosphoserine. Tyr-1155 is subject to Phosphotyrosine. A disordered region spans residues 1161 to 1194 (DFKRDSVSGGGPCTNRSHIKHGTGDKHGVVSGVP). Ser-1255 and Ser-1259 each carry phosphoserine. Residues 1271-1301 (AVTSNASTTKYPQSPTNSKAQKKNRNKLRRQ) are disordered. Residues 1272–1289 (VTSNASTTKYPQSPTNSK) show a composition bias toward polar residues. Residues 1290-1301 (AQKKNRNKLRRQ) are compositionally biased toward basic residues. An interaction with DAPK1 region spans residues 1292–1304 (KKNRNKLRRQHSY). Ser-1303 carries the phosphoserine; by DAPK1 modification. Phosphotyrosine is present on Tyr-1474. The PDZ-binding motif lies at 1482–1484 (SDV).

It belongs to the glutamate-gated ion channel (TC 1.A.10.1) family. NR2B/GRIN2B subfamily. As to quaternary structure, heterotetramer. Forms heterotetrameric channels composed of two GluN1/zeta subunits (GRIN1), and two identical GluN2/epsilon subunits (GRIN2A, GRIN2B, GRIN2C or GRIN2D) or GluN3 subunits (GRIN3A or GRIN3B) (in vitro). Can also form heterotetrameric channels that contain at least two GluN1 subunits and at least two different GluN2 subunits (or a combination of one GluN2 and one GluN3 subunits) (in vitro). In vivo, the subunit composition may depend on the expression levels of the different subunits. Found in a complex with GRIN1 and GRIN3B. Found in a complex with GRIN1, GRIN3A and PPP2CB. Interacts with PDZ domains of PATJ, DLG3 and DLG4. Interacts with HIP1 and NETO1. Interacts with MAGI3. Interacts with DAPK1. Found in a complex with GRIN1 and PRR7. Interacts with PRR7. Interacts with CAMK2A. Interacts with ARC; preventing ARC oligomerization. Interacts with TMEM25. Interacts (via the extreme C-terminus) with FRMPD2 (via the second PDZ domain); the interaction is direct and is likely to promote NMDAR-mediated neural signal transmission. Interacts with FAM81A; the interaction facilitates condensate formation via liquid-liquid phase separation. Post-translationally, phosphorylated on tyrosine residues. Phosphorylation at Ser-1303 by DAPK1 enhances synaptic NMDA receptor channel activity. As to expression, primarily found in the fronto-parieto-temporal cortex and hippocampus pyramidal cells, lower expression in the basal ganglia.

The protein localises to the cell membrane. Its subcellular location is the postsynaptic cell membrane. It localises to the cell projection. It is found in the dendrite. The protein resides in the late endosome. The protein localises to the lysosome. Its subcellular location is the cytoplasm. It localises to the cytoskeleton. It carries out the reaction Ca(2+)(in) = Ca(2+)(out). It catalyses the reaction Na(+)(in) = Na(+)(out). The enzyme catalyses K(+)(in) = K(+)(out). Component of N-methyl-D-aspartate (NMDA) receptors (NMDARs) that function as heterotetrameric, ligand-gated cation channels with high calcium permeability and voltage-dependent block by Mg(2+). Participates in synaptic plasticity for learning and memory formation by contributing to the long-term depression (LTD) of hippocampus membrane currents. Channel activation requires binding of the neurotransmitter L-glutamate to the GluN2 subunit, glycine or D-serine binding to the GluN1 subunit, plus membrane depolarization to eliminate channel inhibition by Mg(2+). NMDARs mediate simultaneously the potasium efflux and the influx of calcium and sodium. Each GluN2 subunit confers differential attributes to channel properties, including activation, deactivation and desensitization kinetics, pH sensitivity, Ca2(+) permeability, and binding to allosteric modulators. In concert with DAPK1 at extrasynaptic sites, acts as a central mediator for stroke damage. Its phosphorylation at Ser-1303 by DAPK1 enhances synaptic NMDA receptor channel activity inducing injurious Ca2+ influx through them, resulting in an irreversible neuronal death. This Homo sapiens (Human) protein is Glutamate receptor ionotropic, NMDA 2B.